Consider the following 158-residue polypeptide: FUN14 domain-containing protein 1 (158 aa).

Positions 21 to 24 (YEVV) match the YXXL motif. 2 helical membrane-spanning segments follow: residues 51–70 (YSVT…AGYL) and 77–98 (IAAT…SGYV).

This sequence belongs to the FUN14 family.

The protein localises to the mitochondrion outer membrane. Acts as an activator of hypoxia-induced mitophagy, an important mechanism for mitochondrial quality control. The chain is FUN14 domain-containing protein 1 (fundc1) from Tetraodon nigroviridis (Spotted green pufferfish).